The following is a 292-amino-acid chain: Cyclin-dependent-like kinase 5 (292 aa).

Residues 4–286 (YDKMEKIGEG…ADAALRHAYF (283 aa)) enclose the Protein kinase domain. ATP-binding positions include 10-18 (IGEGTYGTV) and K33. The active-site Proton acceptor is D126. Residues N131 and D144 each coordinate Mg(2+).

The protein belongs to the protein kinase superfamily. CMGC Ser/Thr protein kinase family. CDC2/CDKX subfamily. Heterodimer composed of a catalytic subunit cdk-5 and a regulatory subunit cdka-1. Interaction with cdka-1 is required for cdk-5 activation. Mg(2+) is required as a cofactor.

Its subcellular location is the cytoplasm. The protein localises to the cell projection. The protein resides in the dendrite. It carries out the reaction L-seryl-[protein] + ATP = O-phospho-L-seryl-[protein] + ADP + H(+). It catalyses the reaction L-threonyl-[protein] + ATP = O-phospho-L-threonyl-[protein] + ADP + H(+). Proline-directed serine/threonine-protein kinase which, in several motor neurons, promotes the polarized trafficking of synaptic vesicles and dense-core vesicles (DCV). In the ventral nerve cord, phosphorylates lin-10 and thereby prevents lin-10-mediated anterograde trafficking of the glutamate receptor glr-1. Involved in the inhibition of glr-1 trafficking in hypoxic conditions. In DA motor neurons but not in DB motor neurons, regulates axonal transport of synaptic vesicle precursors by inhibiting dynein-mediated retrograde transport. Regulates the trafficking of dense-core vesicles in DA and DB motor neurons by promoting anterograde trafficking to the axon and preventing dynein-dependent trafficking to the dendrite. May regulate these processes in association with cdka-1/p35. Activity may be regulated by cyy-1. Involved in synapse formation during DD motor neuron remodeling by regulating transport of disassembled synaptic material to the new synaptic sites probably by activating the motor protein unc-104/kinesin-3. Regulates microtubule polarity in the dendrite of DB motor neurons. May also play a role in GABAergic synaptic vesicle localization in the ventral nerve cord. This is Cyclin-dependent-like kinase 5 from Caenorhabditis elegans.